Here is a 282-residue protein sequence, read N- to C-terminus: MSGADRIPAAGAAPDSASGRAAVASAYQRFEPRAYLRNNYAPPRGDLCNPNGVGPWKLRCLAQTFATGEVSGRTLIDIGSGPTVYQLLSACSHFEDITMTDFLEVNRQELGRWLREEPGAFNWSMYSQYACLIEGKGESWQEKERQLRARVKRVLPIDVHQPQPLGTGSPAPLPADTLVSAFCLEAVSPDLASFQRALDHITTLLRPGGHLLLIGALEESWYLAGEARLMVVPVSEEEVREALVRSGYEVRDLRTYIMPAHLQTGVDDVKGIFFAWAQKVGL.

S-adenosyl-L-methionine contacts are provided by residues Tyr35, Tyr40, 79 to 80 (GS), Tyr85, Asp101, Asn106, 158 to 159 (DV), and Ala181. Residues Glu219 and Asp267 each contribute to the octopamine site.

The protein belongs to the class I-like SAM-binding methyltransferase superfamily. NNMT/PNMT/TEMT family. As to expression, expressed in the adrenal medulla.

It catalyses the reaction phenylethanolamine + S-adenosyl-L-methionine = N-methylphenylethanolamine + S-adenosyl-L-homocysteine + H(+). It carries out the reaction (R)-noradrenaline + S-adenosyl-L-methionine = (R)-adrenaline + S-adenosyl-L-homocysteine + H(+). The catalysed reaction is (R)-normetanephrine + S-adenosyl-L-methionine = (R)-metanephrine + S-adenosyl-L-homocysteine + H(+). The enzyme catalyses (R)-octopamine + S-adenosyl-L-methionine = (R)-synephrine + S-adenosyl-L-homocysteine + H(+). It participates in catecholamine biosynthesis; (R)-adrenaline biosynthesis; (R)-adrenaline from (R)-noradrenaline: step 1/1. Inhibited by p-chloromercuribenaoate. Its function is as follows. Catalyzes the transmethylation of nonepinephrine (noradrenaline) to form epinephrine (adrenaline), using S-adenosyl-L-methionine as the methyl donor. Other substrates include phenylethanolamine, octopamine and normetanephrine. The sequence is that of Phenylethanolamine N-methyltransferase (PNMT) from Macaca mulatta (Rhesus macaque).